Reading from the N-terminus, the 243-residue chain is Venom nerve growth factor (243 aa).

Positions 1–18 (MSMLCYTLIIAFLIGIWA) are cleaved as a signal peptide. The propeptide occupies 19–125 (APKSEDNVPL…TLNRNIWANN (107 aa)). Basic and acidic residues predominate over residues 47–66 (GLKTSRNTDQHHPTPKKSED). A disordered region spans residues 47 to 70 (GLKTSRNTDQHHPTPKKSEDQELG). 3 disulfide bridges follow: cysteine 139–cysteine 204, cysteine 182–cysteine 232, and cysteine 192–cysteine 234. Asparagine 148 carries an N-linked (GlcNAc...) asparagine glycan.

This sequence belongs to the NGF-beta family. In terms of assembly, homodimer. As to expression, expressed by the venom gland.

Its subcellular location is the secreted. In terms of biological role, nerve growth factor is important for the development and maintenance of the sympathetic and sensory nervous systems. It stimulates division and differentiation of sympathetic and embryonic sensory neurons as well as basal forebrain cholinergic neurons in the brain. Its relevance in the snake venom is not clear. However, it has been shown to inhibit metalloproteinase-dependent proteolysis of platelet glycoprotein Ib alpha, suggesting a metalloproteinase inhibition to prevent metalloprotease autodigestion and/or protection against prey proteases. Binds a lipid between the two protein chains in the homodimer. The lipid-bound form promotes histamine relase from mouse mast cells, contrary to the lipid-free form. The polypeptide is Venom nerve growth factor (Bungarus multicinctus (Many-banded krait)).